Here is a 265-residue protein sequence, read N- to C-terminus: Methyl-coenzyme M reductase II subunit gamma (265 aa).

R123 is a coenzyme M binding site.

It belongs to the methyl-coenzyme M reductase gamma subunit family. In terms of assembly, MCR is a hexamer of two alpha, two beta, and two gamma chains, forming a dimer of heterotrimers. Coenzyme F430 is required as a cofactor.

The catalysed reaction is coenzyme B + methyl-coenzyme M = methane + coenzyme M-coenzyme B heterodisulfide. The protein operates within one-carbon metabolism; methyl-coenzyme M reduction; methane from methyl-coenzyme M: step 1/1. Its function is as follows. Component of the methyl-coenzyme M reductase (MCR) I that catalyzes the reductive cleavage of methyl-coenzyme M (CoM-S-CH3 or 2-(methylthio)ethanesulfonate) using coenzyme B (CoB or 7-mercaptoheptanoylthreonine phosphate) as reductant which results in the production of methane and the mixed heterodisulfide of CoB and CoM (CoM-S-S-CoB). This is the final step in methanogenesis. The chain is Methyl-coenzyme M reductase II subunit gamma (mrtG) from Methanothermobacter marburgensis (strain ATCC BAA-927 / DSM 2133 / JCM 14651 / NBRC 100331 / OCM 82 / Marburg) (Methanobacterium thermoautotrophicum).